Reading from the N-terminus, the 161-residue chain is pEARLI1-like lipid transfer protein 1 (161 aa).

A signal peptide spans 1–25; it reads MASKNSASLALFFALNILFFTLTVA. The stretch at 32–39 is one A-1 repeat; the sequence is PSPKPKPV. Residues 32 to 76 are disordered; sequence PSPKPKPVPSPKPKPVQCPPPPRPSVPSPNPRPVTPPRTPGSSGN. Pro residues predominate over residues 33-70; sequence SPKPKPVPSPKPKPVQCPPPPRPSVPSPNPRPVTPPRT. The interval 34-49 is 2 X 8 AA tandem repeats A of P-S-P-K-P-K-P-V; the sequence is PKPKPVPSPKPKPVQC. Residues 40 to 47 form an A-2 repeat; sequence PSPKPKPV.

Belongs to the plant LTP family. PEARLI1 subfamily. In terms of assembly, self-interacts and binds to DIR1. Interacts with PDLP1.

It is found in the secreted. The protein resides in the cell wall. Its subcellular location is the endoplasmic reticulum. It localises to the cell junction. The protein localises to the plasmodesma. It is found in the plastid. The protein resides in the chloroplast. In terms of biological role, probable lipid transfer protein (LTP). Seems to control the flowering process and lignin synthesis. Together with DIR1, required for glycerol-3-phosphate- (G3P) and azelaic acid- (AA) induced systemic acquired resistance (SAR). Component of plant systemic immunity involved in priming defenses in a AA-dependent manner, by modulating production and/or translocation of a mobile signal(s) during SAR. Confers resistance to Botrytis cinerea and Pseudomonas syringae pv. tomato DC3000 and PmaDG3. May be involved in induced systemic resistance (ISR) mediated by non-pathogenic bacteria (e.g. P. fluorescens GM30). Prevents electrolyte leakage during freezing damage. In Arabidopsis thaliana (Mouse-ear cress), this protein is pEARLI1-like lipid transfer protein 1 (AZI1).